A 103-amino-acid chain; its full sequence is Large ribosomal subunit protein uL24 (103 aa).

The protein belongs to the universal ribosomal protein uL24 family. Part of the 50S ribosomal subunit.

Functionally, one of two assembly initiator proteins, it binds directly to the 5'-end of the 23S rRNA, where it nucleates assembly of the 50S subunit. One of the proteins that surrounds the polypeptide exit tunnel on the outside of the subunit. This Oceanobacillus iheyensis (strain DSM 14371 / CIP 107618 / JCM 11309 / KCTC 3954 / HTE831) protein is Large ribosomal subunit protein uL24.